The chain runs to 85 residues: Contulakin-Lt2 (85 aa).

The signal sequence occupies residues 1–22 (MQMAYWVMVMMMVGITAPLSEG). Positions 23 to 61 (RKLNDAIRGLVPNDLTPQLLQSLVSRRHRVFHLDNTYLK) are excised as a propeptide. Cysteines 65 and 70 form a disulfide. A propeptide spanning residues 76-85 (RRRDLKKRNK) is cleaved from the precursor.

It belongs to the conotoxin C superfamily. In terms of tissue distribution, expressed by the venom duct.

The protein resides in the secreted. Functionally, acts as an agonist of neurotensin receptors. It binds to human neurotensin type 1 receptor (NTSR1), rat neurotensin types 1 and 2 receptors (NTSR1/NTSR2) and mouse neurotensin type 3 receptor (SORT1). The polypeptide is Contulakin-Lt2 (Conus litteratus (Lettered cone)).